We begin with the raw amino-acid sequence, 29 residues long: Cytochrome b6-f complex subunit 8 (29 aa).

Residues 3–23 (ILTLGWVSVLTLFTYSIAMVV) form a helical membrane-spanning segment.

The protein belongs to the PetN family. The 4 large subunits of the cytochrome b6-f complex are cytochrome b6, subunit IV (17 kDa polypeptide, PetD), cytochrome f and the Rieske protein, while the 4 small subunits are PetG, PetL, PetM and PetN. The complex functions as a dimer.

It localises to the cellular thylakoid membrane. Its function is as follows. Component of the cytochrome b6-f complex, which mediates electron transfer between photosystem II (PSII) and photosystem I (PSI), cyclic electron flow around PSI, and state transitions. The chain is Cytochrome b6-f complex subunit 8 from Acaryochloris marina (strain MBIC 11017).